We begin with the raw amino-acid sequence, 838 residues long: Urease (838 aa).

Residues 400 to 838 (GAIDCHVHFI…VPLSRNYFLF (439 aa)) enclose the Urease domain. Ni(2+) contacts are provided by H405, H407, and K488. K488 is subject to N6-carboxylysine. Residue H490 participates in substrate binding. Ni(2+) is bound by residues H517 and H543. The Proton donor role is filled by H591. A Ni(2+)-binding site is contributed by D631.

The protein in the C-terminal section; belongs to the metallo-dependent hydrolases superfamily. Urease alpha subunit family. Homohexamer. Other oligomeric forms may exist depending on pH and presence of salts. Ni(2+) is required as a cofactor. Post-translationally, carboxylation allows a single lysine to coordinate two nickel ions.

The catalysed reaction is urea + 2 H2O + H(+) = hydrogencarbonate + 2 NH4(+). It functions in the pathway nitrogen metabolism; urea degradation; CO(2) and NH(3) from urea (urease route): step 1/1. With respect to regulation, requires the three urease accessory proteins URED, UREF AND UREG for its activation. Its function is as follows. Urea hydrolase involved in nitrogen recycling from ureide, purine, and arginine catabolism. The polypeptide is Urease (Arabidopsis thaliana (Mouse-ear cress)).